Consider the following 215-residue polypeptide: Wtf element wtf7 (215 aa).

Positions 1–21 (MSGSYAPIEDSADELSVHSGN) are disordered. A run of 3 helical transmembrane segments spans residues 119 to 139 (LAQS…CLFF), 149 to 169 (LMGW…SFIL), and 189 to 209 (LILF…YALY).

The protein belongs to the WTF family.

It localises to the spore membrane. Functionally, may act in meiotic drive. In Schizosaccharomyces pombe (strain 972 / ATCC 24843) (Fission yeast), this protein is Wtf element wtf7.